We begin with the raw amino-acid sequence, 124 residues long: Small ribosomal subunit protein uS12 (124 aa).

Residues Met-1–Cys-27 form a disordered region. A compositionally biased stretch (polar residues) spans Glu-17–Cys-27. Asp-89 is modified (3-methylthioaspartic acid).

It belongs to the universal ribosomal protein uS12 family. As to quaternary structure, part of the 30S ribosomal subunit. Contacts proteins S8 and S17. May interact with IF1 in the 30S initiation complex.

Functionally, with S4 and S5 plays an important role in translational accuracy. Interacts with and stabilizes bases of the 16S rRNA that are involved in tRNA selection in the A site and with the mRNA backbone. Located at the interface of the 30S and 50S subunits, it traverses the body of the 30S subunit contacting proteins on the other side and probably holding the rRNA structure together. The combined cluster of proteins S8, S12 and S17 appears to hold together the shoulder and platform of the 30S subunit. This Borreliella afzelii (strain PKo) (Borrelia afzelii) protein is Small ribosomal subunit protein uS12.